Here is an 881-residue protein sequence, read N- to C-terminus: Putative SWI/SNF-related matrix-associated actin-dependent regulator of chromatin subfamily A member 3-like 1 (881 aa).

One can recognise a Helicase ATP-binding domain in the interval 272-486; that stretch reads DKRPDPLRGG…YSLMAFLRFE (215 aa). 285 to 292 contacts ATP; sequence DDMGLGKT. Positions 308 to 343 are disordered; the sequence is STSTPTEEPLDGEGDKIEKKGKKRGRGKSSESVTRK. The DEAH box motif lies at 437–440; that stretch reads DEAH. The RING-type zinc finger occupies 635–674; sequence CPICISPPTNIIITRCAHIFCRACILQTLQRSKPLCPLCR. The interval 681–703 is disordered; the sequence is DLYNAPPPPPDSSNTDGEDAKSS. The region spanning 711-876 is the Helicase C-terminal domain; the sequence is ALLSLLMASR…EREVNVEDVV (166 aa).

It belongs to the SNF2/RAD54 helicase family. RAD16 subfamily.

It localises to the nucleus. Functionally, possesses intrinsic ATP-dependent nucleosome-remodeling activity. This activity may be required for transcriptional activation or repression of specific target promoters. This is Putative SWI/SNF-related matrix-associated actin-dependent regulator of chromatin subfamily A member 3-like 1 from Arabidopsis thaliana (Mouse-ear cress).